The chain runs to 119 residues: Small ribosomal subunit protein uS13 (119 aa).

The tract at residues 92–119 (RRGLPVRGQRTKTNARTRKGPRKAIRAR) is disordered.

The protein belongs to the universal ribosomal protein uS13 family. As to quaternary structure, part of the 30S ribosomal subunit. Forms a loose heterodimer with protein S19. Forms two bridges to the 50S subunit in the 70S ribosome.

Its function is as follows. Located at the top of the head of the 30S subunit, it contacts several helices of the 16S rRNA. In the 70S ribosome it contacts the 23S rRNA (bridge B1a) and protein L5 of the 50S subunit (bridge B1b), connecting the 2 subunits; these bridges are implicated in subunit movement. Contacts the tRNAs in the A and P-sites. The sequence is that of Small ribosomal subunit protein uS13 from Nitrosomonas eutropha (strain DSM 101675 / C91 / Nm57).